Consider the following 432-residue polypeptide: Glutamate-1-semialdehyde 2,1-aminomutase (432 aa).

Lysine 267 bears the N6-(pyridoxal phosphate)lysine mark.

Belongs to the class-III pyridoxal-phosphate-dependent aminotransferase family. HemL subfamily. In terms of assembly, homodimer. It depends on pyridoxal 5'-phosphate as a cofactor.

Its subcellular location is the cytoplasm. It catalyses the reaction (S)-4-amino-5-oxopentanoate = 5-aminolevulinate. The protein operates within porphyrin-containing compound metabolism; protoporphyrin-IX biosynthesis; 5-aminolevulinate from L-glutamyl-tRNA(Glu): step 2/2. This chain is Glutamate-1-semialdehyde 2,1-aminomutase, found in Rhodococcus erythropolis (strain PR4 / NBRC 100887).